A 197-amino-acid chain; its full sequence is Phosphoheptose isomerase (197 aa).

Residues 34-196 (MVQCLLGGNK…DRTLFPQDEQ (163 aa)) enclose the SIS domain. 49-51 (NGG) is a substrate binding site. Positions 58 and 62 each coordinate Zn(2+). Substrate contacts are provided by residues Glu-62, 91–92 (ND), 117–119 (STS), Ser-122, and Gln-172. Zn(2+) contacts are provided by Gln-172 and His-180.

This sequence belongs to the SIS family. GmhA subfamily. Homotetramer. The cofactor is Zn(2+).

The protein localises to the cytoplasm. The catalysed reaction is 2 D-sedoheptulose 7-phosphate = D-glycero-alpha-D-manno-heptose 7-phosphate + D-glycero-beta-D-manno-heptose 7-phosphate. It functions in the pathway carbohydrate biosynthesis; D-glycero-D-manno-heptose 7-phosphate biosynthesis; D-glycero-alpha-D-manno-heptose 7-phosphate and D-glycero-beta-D-manno-heptose 7-phosphate from sedoheptulose 7-phosphate: step 1/1. Catalyzes the isomerization of sedoheptulose 7-phosphate in D-glycero-D-manno-heptose 7-phosphate. The sequence is that of Phosphoheptose isomerase from Shewanella oneidensis (strain ATCC 700550 / JCM 31522 / CIP 106686 / LMG 19005 / NCIMB 14063 / MR-1).